Reading from the N-terminus, the 191-residue chain is Guanylate kinase (191 aa).

In terms of domain architecture, Guanylate kinase-like spans 10 to 188; that stretch reads GQLIVLTGPS…ALHRLVKLIG (179 aa). An ATP-binding site is contributed by 17-24; sequence GPSGVGKG.

The protein belongs to the guanylate kinase family.

It is found in the cytoplasm. The enzyme catalyses GMP + ATP = GDP + ADP. In terms of biological role, essential for recycling GMP and indirectly, cGMP. This chain is Guanylate kinase (gmk), found in Synechocystis sp. (strain ATCC 27184 / PCC 6803 / Kazusa).